A 463-amino-acid chain; its full sequence is tRNA modification GTPase MnmE (463 aa).

Residues R30, E92, and R132 each coordinate (6S)-5-formyl-5,6,7,8-tetrahydrofolate. In terms of domain architecture, TrmE-type G spans 227-386; sequence GLRVALVGRP…LVQAVLERCG (160 aa). K(+) is bound at residue N237. GTP is bound by residues 237–242, 256–262, 281–284, and 342–345; these read NVGKSS, TDLPGTT, DTAG, and NKAD. S241 lines the Mg(2+) pocket. K(+) is bound by residues T256, L258, and T261. T262 is a binding site for Mg(2+). K463 is a binding site for (6S)-5-formyl-5,6,7,8-tetrahydrofolate.

Belongs to the TRAFAC class TrmE-Era-EngA-EngB-Septin-like GTPase superfamily. TrmE GTPase family. Homodimer. Heterotetramer of two MnmE and two MnmG subunits. Requires K(+) as cofactor.

The protein resides in the cytoplasm. Its function is as follows. Exhibits a very high intrinsic GTPase hydrolysis rate. Involved in the addition of a carboxymethylaminomethyl (cmnm) group at the wobble position (U34) of certain tRNAs, forming tRNA-cmnm(5)s(2)U34. In Synechococcus sp. (strain CC9311), this protein is tRNA modification GTPase MnmE.